The chain runs to 356 residues: Pyrimidine monooxygenase RutA (356 aa).

FMN is bound by residues 49–50 (IK), Asn-115, Glu-124, 140–141 (RY), and Ser-190.

Belongs to the NtaA/SnaA/DszA monooxygenase family. RutA subfamily.

The enzyme catalyses uracil + FMNH2 + NADH + O2 = (Z)-3-ureidoacrylate + FMN + NAD(+) + H2O + H(+). It catalyses the reaction thymine + FMNH2 + NADH + O2 = (Z)-2-methylureidoacrylate + FMN + NAD(+) + H2O + H(+). Catalyzes the pyrimidine ring opening between N-3 and C-4 by an unusual flavin hydroperoxide-catalyzed mechanism, adding oxygen atoms in the process to yield ureidoacrylate peracid, that immediately reacts with FMN forming ureidoacrylate and FMN-N(5)-oxide. The FMN-N(5)-oxide reacts spontaneously with NADH to produce FMN. Requires the flavin reductase RutF to regenerate FMN in vivo. The chain is Pyrimidine monooxygenase RutA from Haliangium ochraceum (strain DSM 14365 / JCM 11303 / SMP-2).